Reading from the N-terminus, the 874-residue chain is Probable inorganic carbon transporter subunit DabA (874 aa).

Zn(2+) contacts are provided by cysteine 398, aspartate 400, histidine 580, and cysteine 595.

It belongs to the inorganic carbon transporter (TC 9.A.2) DabA family. As to quaternary structure, forms a complex with DabB. The cofactor is Zn(2+).

Its subcellular location is the cell membrane. Functionally, part of an energy-coupled inorganic carbon pump. This Bacillus cereus (strain Q1) protein is Probable inorganic carbon transporter subunit DabA.